The following is a 183-amino-acid chain: Adenine phosphoribosyltransferase (183 aa).

The protein belongs to the purine/pyrimidine phosphoribosyltransferase family. As to quaternary structure, homodimer.

The protein resides in the cytoplasm. The catalysed reaction is AMP + diphosphate = 5-phospho-alpha-D-ribose 1-diphosphate + adenine. It participates in purine metabolism; AMP biosynthesis via salvage pathway; AMP from adenine: step 1/1. Its function is as follows. Catalyzes a salvage reaction resulting in the formation of AMP, that is energically less costly than de novo synthesis. The chain is Adenine phosphoribosyltransferase from Shewanella piezotolerans (strain WP3 / JCM 13877).